A 298-amino-acid polypeptide reads, in one-letter code: MPIGFNKACLKNVFTVILVLIYLALTAVAVFLAYQTISDFMDKLNHPVMSVSYKEVEEFAAPGIVLFPGKAHLLSCMHHYHDNIPPLVALENLAKRECMKEEVIYHGPYSNQTEKRALVFRGPTDVRNRELIFLQLSRNETEEDFSAISYMIFAKFSDMLESSDKAAFMMDCERNYSMWTFSGGFRTWVKMSLVRTSGRRNESVEFRQESSVVKYIDKRPPLEQTNELFFIVFQWRDPFIQQVKDIVTANPWNTIAILCGVFMALFKAADFAKLSIKWMIRIRKRHIRAKMREMNQIS.

Topologically, residues 1–12 are cytoplasmic; that stretch reads MPIGFNKACLKN. The helical transmembrane segment at 13 to 33 threads the bilayer; the sequence is VFTVILVLIYLALTAVAVFLA. Residues 34–245 lie on the Extracellular side of the membrane; the sequence is YQTISDFMDK…RDPFIQQVKD (212 aa). The chain crosses the membrane as a helical span at residues 246-266; the sequence is IVTANPWNTIAILCGVFMALF. The Cytoplasmic segment spans residues 267–298; that stretch reads KAADFAKLSIKWMIRIRKRHIRAKMREMNQIS.

It belongs to the proton-activated chloride channel family.

Its subcellular location is the cell membrane. The enzyme catalyses chloride(in) = chloride(out). Its function is as follows. Chloride channel gated by pH that facilitates the entry of chloride ions into cells upon exposure to extracellular acidic pH. Displays channel activity with distinct kinetic properties compared to the human ortholog channel. The sequence is that of Proton-activated chloride channel from Danio rerio (Zebrafish).